A 384-amino-acid polypeptide reads, in one-letter code: PqqA peptide cyclase (384 aa).

Residues 15 to 231 (PGPPLWLLAE…NQWRDKLAAE (217 aa)) enclose the Radical SAM core domain. 3 residues coordinate [4Fe-4S] cluster: cysteine 29, cysteine 33, and cysteine 36.

Belongs to the radical SAM superfamily. PqqE family. In terms of assembly, interacts with PqqD. The interaction is necessary for activity of PqqE. The cofactor is [4Fe-4S] cluster.

It catalyses the reaction [PQQ precursor protein] + S-adenosyl-L-methionine = E-Y cross-linked-[PQQ precursor protein] + 5'-deoxyadenosine + L-methionine + H(+). It functions in the pathway cofactor biosynthesis; pyrroloquinoline quinone biosynthesis. Its function is as follows. Catalyzes the cross-linking of a glutamate residue and a tyrosine residue in the PqqA protein as part of the biosynthesis of pyrroloquinoline quinone (PQQ). This is PqqA peptide cyclase from Ectopseudomonas mendocina (strain ymp) (Pseudomonas mendocina).